Reading from the N-terminus, the 1115-residue chain is Iron-regulated protein FrpA (1115 aa).

Hemolysin-type calcium-binding repeat units lie at residues F755–L772, I773–Y790, N901–L918, N919–L936, D937–L954, N955–L972, and I973–Y990.

Belongs to the RTX prokaryotic toxin (TC 1.C.11) family.

The protein resides in the cell outer membrane. The protein localises to the secreted. Its function is as follows. May participate in the pathogenesis of meningococcal disease. The sequence is that of Iron-regulated protein FrpA (frpA) from Neisseria meningitidis serogroup C.